Reading from the N-terminus, the 245-residue chain is 1-(5-phosphoribosyl)-5-[(5-phosphoribosylamino)methylideneamino] imidazole-4-carboxamide isomerase (245 aa).

Residue Asp-7 is the Proton acceptor of the active site. The Proton donor role is filled by Asp-129.

The protein belongs to the HisA/HisF family.

Its subcellular location is the cytoplasm. It catalyses the reaction 1-(5-phospho-beta-D-ribosyl)-5-[(5-phospho-beta-D-ribosylamino)methylideneamino]imidazole-4-carboxamide = 5-[(5-phospho-1-deoxy-D-ribulos-1-ylimino)methylamino]-1-(5-phospho-beta-D-ribosyl)imidazole-4-carboxamide. Its pathway is amino-acid biosynthesis; L-histidine biosynthesis; L-histidine from 5-phospho-alpha-D-ribose 1-diphosphate: step 4/9. The sequence is that of 1-(5-phosphoribosyl)-5-[(5-phosphoribosylamino)methylideneamino] imidazole-4-carboxamide isomerase from Vibrio campbellii (strain ATCC BAA-1116).